Consider the following 159-residue polypeptide: Transmembrane protein 42 (159 aa).

4 helical membrane passes run 37-57 (FWGVFNCLCAGSFGALAAASA), 59-79 (LAFGSEVSMGLCVLGIIVMAS), 100-120 (IASVTVTFSNILSSAFLGYVL), and 124-144 (CQEVLWWGGVFLILCGLTLIH).

It localises to the membrane. This chain is Transmembrane protein 42 (TMEM42), found in Pongo abelii (Sumatran orangutan).